Reading from the N-terminus, the 399-residue chain is MVEAGTRDPLESALLDSRYLVQAKIASGGTSTVYRGLDVRLDRPVALKVMDARYAGDEQFLTRFRLEARAVARLNNRALVAVYDQGKDGRHPFLVMELIEGGTLRELLIERGPMPPHAVVAVLRPVLGGLAAAHRAGLVHRDVKPENILISDDGDVKLADFGLVRAVAAASITSTGVILGTAAYLSPEQVRDGNADPRSDVYSVGVLVYELLTGHTPFTGDSALSIAYQRLDADVPRASAVIDGVPPQFDELVACATARNPADRYADAIAMGADLEAIAEELALPEFRVPAPRNSAQHRSAALYRSRITQQGQLGAKPVHHPTRQLTRQPGDCSEPASGSEPEHEPITGQFAGIAIEEFIWARQHARRMVLVWVSVVLAITGLVASAAWTIGSNLSGLL.

The Cytoplasmic portion of the chain corresponds to 1 to 368; sequence MVEAGTRDPL…FIWARQHARR (368 aa). Positions 19-278 constitute a Protein kinase domain; the sequence is YLVQAKIASG…IAMGADLEAI (260 aa). Residues 25 to 33 and Lys-48 contribute to the ATP site; that span reads IASGGTSTV. Asp-142 functions as the Proton acceptor in the catalytic mechanism. Positions 312-346 are disordered; it reads GQLGAKPVHHPTRQLTRQPGDCSEPASGSEPEHEP. The chain crosses the membrane as a helical span at residues 369–389; sequence MVLVWVSVVLAITGLVASAAW. Residues 390–399 are Extracellular-facing; sequence TIGSNLSGLL.

This sequence belongs to the protein kinase superfamily. Ser/Thr protein kinase family. Autophosphorylated.

The protein resides in the cell membrane. It carries out the reaction L-seryl-[protein] + ATP = O-phospho-L-seryl-[protein] + ADP + H(+). The catalysed reaction is L-threonyl-[protein] + ATP = O-phospho-L-threonyl-[protein] + ADP + H(+). This Mycobacterium bovis (strain ATCC BAA-935 / AF2122/97) protein is Serine/threonine-protein kinase PknL (pknL).